A 286-amino-acid chain; its full sequence is Toxin zeta (286 aa).

39 to 46 contributes to the ATP binding site; it reads GQPGSGKT. Positions 249 to 286 are disordered; the sequence is MVQNQHQETPEFKAIQQKMESLQPPTPPIPKTPKLPGI. Pro residues predominate over residues 272 to 286; it reads PPTPPIPKTPKLPGI.

The protein belongs to the zeta toxin family. In terms of assembly, in the presence of the epsilon antitoxin, forms an inactive PezA(2)PezT(2) heterotetramer.

The enzyme catalyses UDP-N-acetyl-alpha-D-glucosamine + ATP = UDP-N-acetyl-alpha-D-glucosamine 3'-phosphate + ADP + H(+). Functionally, toxic component of a type II toxin-antitoxin (TA) system. Phosphorylates UDP-N-acetyl-D-glucosamine (UNAG) on the 3'-hydroxyl group of the N-acetyl-D-glucosamine moiety, yielding UNAG-3P. UNAG-3P inhibits MurA, the first committed step in cell wall synthesis, which is then blocked. Phosphorylation is inhibited by cognate epsilon antitoxin. Part of a postsegregational killing (PSK) system involved in the killing of plasmid-free cells. The zeta toxin induces programmed cell death. The sequence is that of Toxin zeta from Enterococcus hirae.